The sequence spans 350 residues: Kelch domain-containing protein 8A (350 aa).

Kelch repeat units lie at residues 1-31 (MEVP…ETGG), 32-79 (QVYA…ALGK), 81-127 (IMVI…AKDY), 128-175 (RVYA…LRGS), 176-222 (KIYV…TLDN), 224-278 (LYSL…SLSG), and 279-326 (RVIV…VVKN).

In Homo sapiens (Human), this protein is Kelch domain-containing protein 8A (KLHDC8A).